The chain runs to 1742 residues: Complement C4 (1742 aa).

The signal sequence occupies residues 1–19 (MRLLWGLLWAFGLFASSLQ). N-linked (GlcNAc...) asparagine glycosylation occurs at asparagine 60. The cysteines at positions 68 and 97 are disulfide-linked. An N-linked (GlcNAc...) asparagine glycan is attached at asparagine 226. A disulfide bridge connects residues cysteine 634 and cysteine 668. The propeptide occupies 675 to 678 (RKKR). 3 disulfides stabilise this stretch: cysteine 701/cysteine 727, cysteine 702/cysteine 734, and cysteine 715/cysteine 735. One can recognise an Anaphylatoxin-like domain in the interval 701–735 (CCQDGLTRLPMVRSCEQRAARVLQPACREPFLSCC). A glycan (N-linked (GlcNAc...) asparagine) is linked at asparagine 861. Positions 1007 to 1010 (CGEQ) form a cross-link, isoglutamyl cysteine thioester (Cys-Gln). N-linked (GlcNAc...) asparagine glycosylation is found at asparagine 1325 and asparagine 1388. 3 positions are modified to sulfotyrosine: tyrosine 1414, tyrosine 1418, and tyrosine 1420. Positions 1445-1451 (RRNRRRR) are excised as a propeptide. 5 cysteine pairs are disulfide-bonded: cysteine 1469–cysteine 1533, cysteine 1581–cysteine 1586, cysteine 1593–cysteine 1671, cysteine 1616–cysteine 1740, and cysteine 1716–cysteine 1725. In terms of domain architecture, NTR spans 1593-1740 (CPRQRRALER…FIQEYSTLGC (148 aa)).

In absence of complement activation, circulates in blood as a disulfide-linked trimer of an alpha, beta and gamma chain. As to quaternary structure, complement C4b is composed of complement C4b-A, complement C4 beta and complement C4 gamma chains that are associated via disulfide bonds. Non-enzymatic component of the C3 convertase, also named C4bC2b, composed of the serine protease complement C2b (C2), as well as complement C4b. Non-enzymatic component of the C5 convertase, also named C4bC2bC3b, composed of the serine protease complement C2b (C2), complement C3b, as well as complement C4b. In terms of processing, prior to secretion, the single-chain precursor is enzymatically cleaved by plasminogen (PLG) to yield non-identical chains alpha, beta and gamma. During activation of the complement systems, the alpha chain is cleaved into C4a and C4b by different proteases depending on the complement pathway: C4b stays linked to the beta and gamma chains, while C4a is released in the plasma. The alpha chain is cleaved by C1S to generate C4a and C4b following activation by the classical complement system. The alpha chain is cleaved to generate C4a and C4b by MASP2 following activation by the lectin complement system. The alpha chain is cleaved by GZMK to generate C4a and C4b following activation by the GZMK complement system. Further degradation of C4b by C1 into the inactive fragments C4c and C4d blocks the generation of C3 convertase. The proteolytic cleavages often are incomplete so that many structural forms can be found in plasma. Upon activation, the internal thioester bond reacts with carbohydrate antigens on the target surface to form amide or ester bonds, leading to covalent association with the surface of pathogens. Post-translationally, complement C4b interacts with complement C3b via a thioester linkage. In terms of processing, N- and O-glycosylated. O-glycosylated with a core 1 or possibly core 8 glycan.

It localises to the secreted. The protein localises to the cell surface. In terms of biological role, precursor of non-enzymatic components of the classical, lectin and GZMK complement pathways, which consist in a cascade of proteins that leads to phagocytosis and breakdown of pathogens and signaling that strengthens the adaptive immune system. Functionally, non-enzymatic component of C3 and C5 convertases. Generated following cleavage by complement proteases (C1S, MASP2 or GZMK, depending on the complement pathway), it covalently attaches to the surface of pathogens, where it acts as an opsonin that marks the surface of antigens for removal. It then recruits the serine protease complement C2b to form the C3 and C5 convertases, which cleave and activate C3 and C5, respectively, the next components of the complement pathways. Complement C4b-A isotype is responsible for effective binding to form amide bonds with immune aggregates or protein antigens, while complement C4b-B isotype catalyzes the transacylation of the thioester carbonyl group to form ester bonds with carbohydrate antigens. Its function is as follows. Putative humoral mediator released following cleavage by complement proteases (C1S, MASP2 or GZMK, depending on the complement pathway). While it is strongly similar to anaphylatoxins, its role is unclear. Was reported to act as a mediator of local inflammatory process; however these effects were probably due to contamination with C3a and/C5a anaphylatoxins in biological assays. The chain is Complement C4 from Cavia porcellus (Guinea pig).